Consider the following 428-residue polypeptide: UPF0597 protein BF3772 (428 aa).

The protein belongs to the UPF0597 family.

In Bacteroides fragilis (strain YCH46), this protein is UPF0597 protein BF3772.